We begin with the raw amino-acid sequence, 458 residues long: MYGKIRTIHFVGIGGIGMSGIAEVLLNLGYRVSGSDLRVSEITQRLCDLGGMIAYGHAAENLGDADVVVTSTAVKSDNPEVIEAHRRLIPVIPRAEMLAELMRMKYGIAVAGTHGKTTTTSMVSTVLSKSGIDPTVVIGGRLDSIGSNAKLGQGKFLVAEADESDGSFLKLSPIIAVVTNVDADHLDYYSDLDEIKRTFVDFINKIPFYGVAILCLDDPNVQALIPQVGKRFVTYGMSTQADYNAQEISYQEERTTFTVCWQGERLGQLSIRMPGQHNVLNALAAVAVARELEIPFEQIAEAFCDFCGVQRRFQPKYQGRDIMVVDDYGHHPAEIKVTLAAACSGWNRRVVAVFQPHRYSRTQALFDEFVTAFYQADHLVVMDIYAAGETPIPGVEARLLAEGIAGHGHRDVHYCPDAEAVAAHLREVVQAGDLVLTLGAGNVWQIGEALAEWLQQRD.

112-118 lines the ATP pocket; that stretch reads GTHGKTT.

The protein belongs to the MurCDEF family.

Its subcellular location is the cytoplasm. It catalyses the reaction UDP-N-acetyl-alpha-D-muramate + L-alanine + ATP = UDP-N-acetyl-alpha-D-muramoyl-L-alanine + ADP + phosphate + H(+). Its pathway is cell wall biogenesis; peptidoglycan biosynthesis. Its function is as follows. Cell wall formation. This is UDP-N-acetylmuramate--L-alanine ligase from Syntrophotalea carbinolica (strain DSM 2380 / NBRC 103641 / GraBd1) (Pelobacter carbinolicus).